An 89-amino-acid polypeptide reads, in one-letter code: Cell division protein ZapA (89 aa).

Belongs to the ZapA family. Type 2 subfamily. Homodimer. Interacts with FtsZ.

Its subcellular location is the cytoplasm. In terms of biological role, activator of cell division through the inhibition of FtsZ GTPase activity, therefore promoting FtsZ assembly into bundles of protofilaments necessary for the formation of the division Z ring. It is recruited early at mid-cell but it is not essential for cell division. This chain is Cell division protein ZapA, found in Bacillus mycoides (strain KBAB4) (Bacillus weihenstephanensis).